The sequence spans 260 residues: Chlorocatechol 1,2-dioxygenase (260 aa).

Fe cation-binding residues include Tyr130, Tyr164, His188, and His190.

The protein belongs to the intradiol ring-cleavage dioxygenase family. Fe(3+) serves as cofactor.

The catalysed reaction is 3-chlorocatechol + O2 = (2E,4Z)-2-chloromuconate + 2 H(+). It carries out the reaction 3,5-dichlorocatechol + O2 = (2E,4E)-2,4-dichloromuconate + 2 H(+). The protein operates within aromatic compound metabolism; 3-chlorocatechol degradation. Its function is as follows. Preferentially converts 3-chlorocatechol and 3,5-dichlorocatechol as opposed to other chlorinated catechols. Retains diminished activity toward non-chlorinated substrates. This Pseudomonas putida (Arthrobacter siderocapsulatus) protein is Chlorocatechol 1,2-dioxygenase (clcA).